The following is a 215-amino-acid chain: Vesicle-trafficking protein SEC22b (215 aa).

Residues 1 to 194 (MVLLTMIARV…KYLNMRSTYA (194 aa)) lie on the Cytoplasmic side of the membrane. Residues 6–119 (MIARVADGLP…YSFIEFDTFI (114 aa)) form the Longin domain. K38 carries the N6-acetyllysine modification. Residues 134 to 194 (NLGSINTELQ…KYLNMRSTYA (61 aa)) form the v-SNARE coiled-coil homology domain. S137 carries the post-translational modification Phosphoserine. T140 bears the Phosphothreonine mark. A phosphoserine mark is found at S164, S168, S174, and S177. A helical; Anchor for type IV membrane protein membrane pass occupies residues 195-215 (KLAAVAVFFIMLIVYVRFWWL).

This sequence belongs to the synaptobrevin family. In terms of assembly, interacts with STX17. Component of two distinct SNARE complexes consisting of STX5, GOSR2/BOS1, BET1 and SEC22B or STX18, USE1L, BNIP1/SEC20L and SEC22B. YKT6 can probably replace SEC22B as subunit of either complex. Interacts with the COPII Sec23/24 complex composed of SEC23A and SEC24A; recruits SEC22B into COPII-coated vesicles to allow its transport from the endoplasmic reticulum to the Golgi. Interacts with BET1.

The protein resides in the endoplasmic reticulum membrane. It is found in the endoplasmic reticulum-Golgi intermediate compartment membrane. It localises to the golgi apparatus. The protein localises to the cis-Golgi network membrane. Its subcellular location is the trans-Golgi network membrane. The protein resides in the melanosome. In terms of biological role, SNARE involved in targeting and fusion of ER-derived transport vesicles with the Golgi complex as well as Golgi-derived retrograde transport vesicles with the ER. The protein is Vesicle-trafficking protein SEC22b (Sec22b) of Cricetulus griseus (Chinese hamster).